The following is an 839-amino-acid chain: Protein translocase subunit SecA (839 aa).

ATP-binding positions include glutamine 85, glycine 103–threonine 107, and aspartate 493. Positions glutamine 780 to serine 790 are enriched in basic and acidic residues. The tract at residues glutamine 780–serine 839 is disordered. The segment covering glutamine 791–threonine 809 has biased composition (polar residues). Residues cysteine 821, cysteine 823, cysteine 832, and histidine 833 each contribute to the Zn(2+) site. Basic residues predominate over residues lysine 827–serine 839.

The protein belongs to the SecA family. In terms of assembly, monomer and homodimer. Part of the essential Sec protein translocation apparatus which comprises SecA, SecYEG and auxiliary proteins SecDF. Other proteins may also be involved. It depends on Zn(2+) as a cofactor.

It is found in the cell membrane. Its subcellular location is the cytoplasm. It catalyses the reaction ATP + H2O + cellular proteinSide 1 = ADP + phosphate + cellular proteinSide 2.. Part of the Sec protein translocase complex. Interacts with the SecYEG preprotein conducting channel. Has a central role in coupling the hydrolysis of ATP to the transfer of proteins into and across the cell membrane, serving as an ATP-driven molecular motor driving the stepwise translocation of polypeptide chains across the membrane. This is Protein translocase subunit SecA from Streptococcus pyogenes serotype M1.